Reading from the N-terminus, the 59-residue chain is Large ribosomal subunit protein bL32 (59 aa).

This sequence belongs to the bacterial ribosomal protein bL32 family.

In Synechococcus sp. (strain JA-2-3B'a(2-13)) (Cyanobacteria bacterium Yellowstone B-Prime), this protein is Large ribosomal subunit protein bL32.